The primary structure comprises 689 residues: uncharacterized protein (689 aa).

Ser-566 serves as a coordination point for substrate. Tyr-579 functions as the Proton acceptor in the catalytic mechanism.

It belongs to the short-chain dehydrogenases/reductases (SDR) family.

This is an uncharacterized protein from Bacillus subtilis (strain 168).